The following is a 320-amino-acid chain: uncharacterized protein (320 aa).

The interval 196 to 273 (VVPEYDFDSE…RSKNNSNTTK (78 aa)) is disordered. Over residues 200-210 (YDFDSESESDN) the composition is skewed to acidic residues. Basic and acidic residues predominate over residues 211 to 226 (SEEKRFVPVLETEKAP). Over residues 248–273 (QPKNPKQTTLKNTLDTRSKNNSNTTK) the composition is skewed to polar residues.

This is an uncharacterized protein from Acanthamoeba polyphaga mimivirus (APMV).